The following is a 250-amino-acid chain: MLREHAMYTHHCFVLACCLGAALPAPASDLFAPAELSDQELSQLRGRYVLPGRIVSFGVTMSSTWQNASGQVLGARVDLQVRQNLARPVLNVTLVDRPGDAPPPVAGNGQVLGGAGLAQTQGVSQSIRTAGDHNSASNGVSIEVRHGEAPPPLSGGTPLEGALALSGETGTVKVTPNGGALQLAIQASGQGASLQSLGAGGLVQSVALSGNRNLVQNLAALEVMLKDRPGADPALNCAWEQLRALRPSGY.

The signal sequence occupies residues 1–27 (MLREHAMYTHHCFVLACCLGAALPAPA).

It belongs to the FapE family. As to quaternary structure, a minor component of purified amyloid fibrils. Fibrils are resistant to boiling in 2% (weight/vol) SDS and require &gt;90% (vol/vol) formic acid to dissolve.

The protein localises to the fimbrium. It is found in the secreted. Functionally, a minor component of the functional amyloid in this bacterium. Upon overexpression of the endogenous six-gene locus (fapA-fapF), cells form large clumps during liquid growth, make large amounts of biofilm and produce amyloid fibrils. This Pseudomonas aeruginosa (strain ATCC 15692 / DSM 22644 / CIP 104116 / JCM 14847 / LMG 12228 / 1C / PRS 101 / PAO1) protein is Functional amyloid sbunit FapE.